We begin with the raw amino-acid sequence, 816 residues long: MSDRCKIYYQSLYLFVKIFIKSKLIPKNFVTDSGLDSSSPIFYILPSRSKMDLIILREESLKQGLPDPLTPLKVDEIQIPRYLFIDDIKESHGHSPSSAETLFSRYLGLYSKNSTLDITILPVSVMIGRRPISICQNRKINRLQKFFTAFWLGRDSFVHFSNPISLSRIINAHSKDLRIVYKLARVARIHFFRQYLSSVGRALPVHSDLFKKLLSSEAIEKALLDEARSKKISPQKAHDNALRLMKEIASQVSYETIRLSDRVLGWMWNRFYQGIHVHNADCVRQLAYKGHSIVYVPCHRSHMDYLLLSYVLYYEGLATPHIAAGINLNFWPAGAIFRRLGAFFIRRNFKGNKLYSTIFRAYLDELFTGGYPVEYFIEGGRSRTGLLLEPKTGTLSMTIQAMLRDISPSITLIPVYIGYEHVIEVLSYTKELRGERKKKENFFQMIGGLRQLRHLGQGYVNFGEPIQLKLYLDKNVPDWRESIRPINKIEATRPHWLASTVKDLAYQIMININHAAAINAINLCSTALLASENQALTRPELLEQLNCYLQLMRHAPHNQYSSVTDQMPEELLDHALHMNKFVVQKNHPHERICLPKEQVPLMRYYRNNIQHLLILPSLIATTVLCHHNISRQEIIRQITLLYPVFKIRWFLYYSEKQLLEALNLLMDELIRQKCVENKNHHFVVNLSSGMMTLKILASGIKEILQHYSIIFFLLTVYPDIDRKSLEKESRAMAKHLCILENMPSAEFFHSSIFSGLLTLLFEKREKMVSNDYSAQKNIEEIFNILKGLISSQMISVMQENFSLKKEWLTYKKKTTD.

The HXXXXD motif signature appears at 298-303 (CHRSHM).

This sequence belongs to the GPAT/DAPAT family.

It localises to the cell membrane. The catalysed reaction is sn-glycerol 3-phosphate + an acyl-CoA = a 1-acyl-sn-glycero-3-phosphate + CoA. Its pathway is phospholipid metabolism; CDP-diacylglycerol biosynthesis; CDP-diacylglycerol from sn-glycerol 3-phosphate: step 1/3. The protein is Glycerol-3-phosphate acyltransferase of Hamiltonella defensa subsp. Acyrthosiphon pisum (strain 5AT).